We begin with the raw amino-acid sequence, 252 residues long: Putative teichuronic acid biosynthesis glycosyltransferase TuaG (252 aa).

It belongs to the glycosyltransferase 2 family.

It participates in cell wall biogenesis; teichuronic acid biosynthesis. In Bacillus subtilis (strain 168), this protein is Putative teichuronic acid biosynthesis glycosyltransferase TuaG (tuaG).